The chain runs to 760 residues: MRYNQFSYIPTSLERAAEELKELGFDLDLQKTAKANLESFLRKLFFHYPDSDYPLSHLIAKNDMDALSFFQSEQELSKEVFDLLALQVLGFIPGVDFTEADAFLDKLAFPIHFDETEIIKHIHHLLATRCKSGMTLIDDLVSQGMLTMDNDYHFFNGKSLATFDTSQLIREVVYVEAPLDTDQDGQLDLIKVNIIRPQSQKPLPTLMTPSPYHQGINEVANDKKLYRMEKELVVKKRRQITVEDRDFIPLETQPCKLPIGQNLESFSYINSYSLNDYFLARGFANIYVSGVGTAGSTGFMTSGDYAQIESFKAVIDWLNGRATAYTSHSKTHQVRADWANGLVCTTGKSYLGTMSTGLATTGVDGLAMIIAESAISSWYNYYRENGLVCSPGGYPGEDLDVLTELTYSRNLLAGDYLRHNDRYQELLNQQSQALDRQSGDYNQFWHDRNYLKNAHQIKCDVVYTHGLQDWNVKPRQVYEIVNALPSTINKHLFLHQGEHVYMHNWQSIDFRESMNALLCQKLLGLANDFSLPEMIWQDNTCPQNWQERKVFGTSTIKELDLGQELLLIDNHYGEDEFKAYGKDFRAFKAALFKGKANQALVDILLEEDLLINGEIVLQLKVKSSENKGLLSAQILDYGKKKRLGDLPIALTQSSIDNGQNFSREPLKELPFRENSYRVISKGFMNLQNRNNLSSIETIPNNKWMTVRLPLQPTIYHLEKGDTLRVILYTTDFEHTVRDNSNYALTIDLSQSQLIVPIASN.

Catalysis depends on charge relay system residues Ser349, Asp469, and His499.

This sequence belongs to the peptidase S15 family. Homodimer.

Its subcellular location is the cytoplasm. The catalysed reaction is Hydrolyzes Xaa-Pro-|- bonds to release unblocked, N-terminal dipeptides from substrates including Ala-Pro-|-p-nitroanilide and (sequentially) Tyr-Pro-|-Phe-Pro-|-Gly-Pro-|-Ile.. Removes N-terminal dipeptides sequentially from polypeptides having unsubstituted N-termini provided that the penultimate residue is proline. This Streptococcus pyogenes serotype M3 (strain ATCC BAA-595 / MGAS315) protein is Xaa-Pro dipeptidyl-peptidase.